The primary structure comprises 329 residues: MDVVLQYADKYVFDTFYGKIAESFDSSSSFANTAVNSTTLGLAEKVNFAITSGLLDRNNVWRQFTSLFLITWIMGTLSYFLSASFAYYVYFDREEARRHPKFLKNQEHLELMVALKNLPGMAILTAPWFLAEIRGYGYVYDKLDEYGYFYLFFSIALFLLFSDFLIYWIHRALHHRWLYAPLHKLHHKWIVPTPYSSHAFHYLDGYSQSLPYHMFPFFFPLNKYVYLLLFGSVNYWTVLIHDGKYFSNNAVVNGAAHHAAHHMYFNYNYGQFFTLFDRLCSSYRQPDQELFDAELRNEKLQEQRIRFMETVQYTVEGKDDRTYASKKDN.

The next 2 helical transmembrane spans lie at 67–87 (LFLITWIMGTLSYFLSASFAY) and 149–169 (FYLFFSIALFLLFSDFLIYWI). The 126-residue stretch at 156-281 (ALFLLFSDFL…FFTLFDRLCS (126 aa)) folds into the Fatty acid hydroxylase domain. A Histidine box-1 motif is present at residues 170-175 (HRALHH). The short motif at 183 to 187 (HKLHH) is the Histidine box-2 element. The helical transmembrane segment at 210 to 230 (LPYHMFPFFFPLNKYVYLLLF) threads the bilayer. The Histidine box-3 signature appears at 257-262 (HHAAHH).

Belongs to the sterol desaturase family. It depends on Fe cation as a cofactor.

The protein resides in the endoplasmic reticulum membrane. The protein localises to the golgi apparatus membrane. It catalyses the reaction episterol + 2 Fe(II)-[cytochrome b5] + O2 + 2 H(+) = 5-dehydroepisterol + 2 Fe(III)-[cytochrome b5] + 2 H2O. The protein operates within steroid metabolism; ergosterol biosynthesis. Its function is as follows. C-5 sterol desaturase; part of the third module of ergosterol biosynthesis pathway that includes by the late steps of the pathway. Erg31 and erg32 catalyze the introduction of a C-5 double bond in the B ring to produce 5-dehydroepisterol. The third module or late pathway involves the ergosterol synthesis itself through consecutive reactions that mainly occur in the endoplasmic reticulum (ER) membrane. Firstly, the squalene synthase erg9 catalyzes the condensation of 2 farnesyl pyrophosphate moieties to form squalene, which is the precursor of all steroids. Secondly, squalene is converted into lanosterol by the consecutive action of the squalene epoxidase erg1 and the lanosterol synthase erg7. The lanosterol 14-alpha-demethylase erg11/cyp1 catalyzes C14-demethylation of lanosterol to produce 4,4'-dimethyl cholesta-8,14,24-triene-3-beta-ol. In the next steps, a complex process involving various demethylation, reduction and desaturation reactions catalyzed by the C-14 reductase erg24 and the C-4 demethylation complex erg25-erg26-erg27 leads to the production of zymosterol. Erg28 likely functions in the C-4 demethylation complex reaction by tethering erg26 and Erg27 to the endoplasmic reticulum or to facilitate interaction between these proteins. Then, the sterol 24-C-methyltransferase erg6 catalyzes the methyl transfer from S-adenosyl-methionine to the C-24 of zymosterol to form fecosterol. The C-8 sterol isomerase erg2 catalyzes the reaction which results in unsaturation at C-7 in the B ring of sterols and thus converts fecosterol to episterol. The sterol-C5-desaturases erg31 and erg32 then catalyze the introduction of a C-5 double bond in the B ring to produce 5-dehydroepisterol. The C-22 sterol desaturase erg5 further converts 5-dehydroepisterol into ergosta-5,7,22,24(28)-tetraen-3beta-ol by forming the C-22(23) double bond in the sterol side chain. Finally, ergosta-5,7,22,24(28)-tetraen-3beta-ol is substrate of the C-24(28) sterol reductase erg4 to produce ergosterol. In the genus Schizosaccharomyces, a second route exists between lanosterol and fecosterol, via the methylation of lanosterol to eburicol by erg6, followed by C14-demethylation by erg11/cyp1 and C4-demethylation by the demethylation complex erg25-erg26-erg27. The chain is Delta(7)-sterol 5(6)-desaturase erg32 from Schizosaccharomyces pombe (strain 972 / ATCC 24843) (Fission yeast).